Here is a 275-residue protein sequence, read N- to C-terminus: 3-methyl-2-oxobutanoate hydroxymethyltransferase (275 aa).

Residues Asp44 and Asp83 each contribute to the Mg(2+) site. 3-methyl-2-oxobutanoate contacts are provided by residues 44–45, Asp83, and Lys113; that span reads DS. Glu115 is a binding site for Mg(2+). The active-site Proton acceptor is the Glu182.

The protein belongs to the PanB family. In terms of assembly, homodecamer; pentamer of dimers. Mg(2+) is required as a cofactor.

It is found in the cytoplasm. It catalyses the reaction 3-methyl-2-oxobutanoate + (6R)-5,10-methylene-5,6,7,8-tetrahydrofolate + H2O = 2-dehydropantoate + (6S)-5,6,7,8-tetrahydrofolate. The protein operates within cofactor biosynthesis; (R)-pantothenate biosynthesis; (R)-pantoate from 3-methyl-2-oxobutanoate: step 1/2. Functionally, catalyzes the reversible reaction in which hydroxymethyl group from 5,10-methylenetetrahydrofolate is transferred onto alpha-ketoisovalerate to form ketopantoate. This chain is 3-methyl-2-oxobutanoate hydroxymethyltransferase, found in Clostridium botulinum (strain Kyoto / Type A2).